A 229-amino-acid polypeptide reads, in one-letter code: MAKKKAFIPFFYFTSIVFLPWLISLCCNKSLKTWITNWWNTRQCETFLNDIQEKSVLEKFIQLEDLFQLDEMIKEYTETDLQQFRLGIHKETIQFIKIHNEYRIHTILHFSTNLISFVILSGYSFWGKEKLFILNSWVQEFLYNLSDTIKAFSILLLTDLCIGFHSPHGWELMIGYIYKDFGFAHYEQILSGLVSTFPVILDTIFKYWIFRYLNRVSPSLVVIYHAIND.

Helical transmembrane passes span 6–26, 107–127, and 189–209; these read AFIP…ISLC, ILHF…SFWG, and ILSG…KYWI.

Belongs to the CemA family.

The protein localises to the plastid. The protein resides in the chloroplast inner membrane. It carries out the reaction K(+)(in) + H(+)(out) = K(+)(out) + H(+)(in). Contributes to K(+)/H(+) antiport activity by supporting proton efflux to control proton extrusion and homeostasis in chloroplasts in a light-dependent manner to modulate photosynthesis. Prevents excessive induction of non-photochemical quenching (NPQ) under continuous-light conditions. Indirectly promotes efficient inorganic carbon uptake into chloroplasts. The chain is Potassium/proton antiporter CemA from Nasturtium officinale (Watercress).